We begin with the raw amino-acid sequence, 348 residues long: Dihydroorotase (348 aa).

Residues His-17 and His-19 each coordinate Zn(2+). Substrate is bound by residues 19 to 21 and Asn-45; that span reads HLR. The Zn(2+) site is built by Lys-103, His-140, and His-178. Lys-103 carries the N6-carboxylysine modification. His-140 contacts substrate. Leu-223 is a substrate binding site. Asp-251 contributes to the Zn(2+) binding site. Asp-251 is an active-site residue. Substrate-binding residues include His-255 and Ala-267.

This sequence belongs to the metallo-dependent hydrolases superfamily. DHOase family. Class II DHOase subfamily. In terms of assembly, homodimer. It depends on Zn(2+) as a cofactor.

The enzyme catalyses (S)-dihydroorotate + H2O = N-carbamoyl-L-aspartate + H(+). It participates in pyrimidine metabolism; UMP biosynthesis via de novo pathway; (S)-dihydroorotate from bicarbonate: step 3/3. Catalyzes the reversible cyclization of carbamoyl aspartate to dihydroorotate. This Shigella sonnei (strain Ss046) protein is Dihydroorotase.